The following is a 424-amino-acid chain: Serine hydroxymethyltransferase 2 (424 aa).

Residues Leu-125 and 129 to 131 (GHL) contribute to the (6S)-5,6,7,8-tetrahydrofolate site. Lys-234 is subject to N6-(pyridoxal phosphate)lysine. Glu-250 is a binding site for (6S)-5,6,7,8-tetrahydrofolate.

It belongs to the SHMT family. Homodimer. It depends on pyridoxal 5'-phosphate as a cofactor.

It localises to the cytoplasm. The catalysed reaction is (6R)-5,10-methylene-5,6,7,8-tetrahydrofolate + glycine + H2O = (6S)-5,6,7,8-tetrahydrofolate + L-serine. The protein operates within one-carbon metabolism; tetrahydrofolate interconversion. Its pathway is amino-acid biosynthesis; glycine biosynthesis; glycine from L-serine: step 1/1. Its function is as follows. Catalyzes the reversible interconversion of serine and glycine with tetrahydrofolate (THF) serving as the one-carbon carrier. This reaction serves as the major source of one-carbon groups required for the biosynthesis of purines, thymidylate, methionine, and other important biomolecules. Also exhibits THF-independent aldolase activity toward beta-hydroxyamino acids, producing glycine and aldehydes, via a retro-aldol mechanism. The protein is Serine hydroxymethyltransferase 2 of Burkholderia pseudomallei (strain 1710b).